Reading from the N-terminus, the 159-residue chain is Transcription elongation factor GreA (159 aa).

Residues 2–77 adopt a coiled-coil conformation; the sequence is EENKEFLLTQ…LENMVRKAVI (76 aa).

Belongs to the GreA/GreB family.

In terms of biological role, necessary for efficient RNA polymerase transcription elongation past template-encoded arresting sites. The arresting sites in DNA have the property of trapping a certain fraction of elongating RNA polymerases that pass through, resulting in locked ternary complexes. Cleavage of the nascent transcript by cleavage factors such as GreA or GreB allows the resumption of elongation from the new 3'terminus. GreA releases sequences of 2 to 3 nucleotides. This Clostridioides difficile (strain 630) (Peptoclostridium difficile) protein is Transcription elongation factor GreA.